The sequence spans 502 residues: UPF0371 protein CLM_0396 (502 aa).

Belongs to the UPF0371 family.

The protein is UPF0371 protein CLM_0396 of Clostridium botulinum (strain Kyoto / Type A2).